A 600-amino-acid polypeptide reads, in one-letter code: NADPH-dependent diflavin oxidoreductase 1 (600 aa).

In terms of domain architecture, Flavodoxin-like spans 6–150; sequence LLILYGSQTG…VVDPWLKDLW (145 aa). Residues 12-17, 59-62, 97-106, and aspartate 132 each bind FMN; these read SQTGTA, ATTG, and LGDSSYPKFN. The region spanning 210–449 is the FAD-binding FR-type domain; the sequence is IHPFLAPVLS…WVKKGSMKFP (240 aa). Residues arginine 354, 386–389, and 420–423 each bind FAD; these read RAFS and GLCS. NADP(+)-binding positions include threonine 463, 518-519, and 524-528; these read SR and KIYVQ. Tryptophan 599 serves as a coordination point for FAD.

It belongs to the NADPH-dependent diflavin oxidoreductase NDOR1 family. This sequence in the N-terminal section; belongs to the flavodoxin family. In the C-terminal section; belongs to the flavoprotein pyridine nucleotide cytochrome reductase family. Interacts with ciapin1; as part of the cytosolic iron-sulfur (Fe-S) protein assembly (CIA) machinery. FAD serves as cofactor. The cofactor is FMN.

It localises to the cytoplasm. The protein localises to the perinuclear region. It carries out the reaction 2 oxidized [2Fe-2S]-[protein] + NADPH = 2 reduced [2Fe-2S]-[protein] + NADP(+) + H(+). In terms of biological role, NADPH-dependent reductase which is a central component of the cytosolic iron-sulfur (Fe-S) protein assembly (CIA) machinery. Transfers electrons from NADPH via its FAD and FMN prosthetic groups to the [2Fe-2S] cluster of ciapin1, another key component of the CIA machinery. In turn, this reduced cluster provides electrons for assembly of cytosolic iron-sulfur cluster proteins. It can also reduce the [2Fe-2S] cluster of cisd1 and activate this protein implicated in Fe/S cluster repair. In Xenopus laevis (African clawed frog), this protein is NADPH-dependent diflavin oxidoreductase 1.